The primary structure comprises 287 residues: Mu-like prophage FluMu DNA transposition protein B (287 aa).

The region spanning 7 to 62 is the HTH cro/C1-type domain; sequence LKQHLSDSQITQAQLAREAGVNAGALSAYLNDNYKGNIADVEAKLAAYLEKKAVQA. Positions 18 to 37 form a DNA-binding region, H-T-H motif; sequence QAQLAREAGVNAGALSAYLN. 98–105 contacts ATP; it reads GMSGVGKT.

Functionally, this protein is a non-specific DNA-binding and ATP-hydrolyzing protein essential for bacteriophage integration and replication. This Haemophilus influenzae (strain ATCC 51907 / DSM 11121 / KW20 / Rd) protein is Mu-like prophage FluMu DNA transposition protein B.